The primary structure comprises 185 residues: Intraflagellar transport protein 22 homolog (185 aa).

Residues 10 to 17, 63 to 67, and 123 to 126 contribute to the GTP site; these read GPCESGKT, DCGGD, and HKPG. Ser137 is modified (phosphoserine).

This sequence belongs to the small GTPase superfamily. Rab family. Component of the IFT complex B, at least composed of IFT20, IFT22, IFT25, IFT27, IFT46, IFT52, TRAF3IP1/IFT54, IFT57, IFT74, IFT80, IFT81, and IFT88. Interacts with IFT88. Interacts with CFAP61.

The protein resides in the cell projection. It localises to the cilium. Its function is as follows. Small GTPase-like component of the intraflagellar transport (IFT) complex B. The sequence is that of Intraflagellar transport protein 22 homolog (Ift22) from Rattus norvegicus (Rat).